Consider the following 296-residue polypeptide: Large ribosomal subunit protein uL18B (296 aa).

Positions 251-296 (PVHEKKPKKEVKKKRWNRAKLSLEQKKDRVAQKKASFLRAQEKADS) are disordered. Over residues 255-268 (KKPKKEVKKKRWNR) the composition is skewed to basic residues. Positions 271–281 (LSLEQKKDRVA) are enriched in basic and acidic residues.

This sequence belongs to the universal ribosomal protein uL18 family. Component of the large ribosomal subunit (LSU). Part of a LSU subcomplex, the 5S RNP which is composed of the 5S RNA, RPL5 and RPL11.

It is found in the cytoplasm. The protein resides in the nucleus. The protein localises to the nucleolus. In terms of biological role, component of the ribosome, a large ribonucleoprotein complex responsible for the synthesis of proteins in the cell. The small ribosomal subunit (SSU) binds messenger RNAs (mRNAs) and translates the encoded message by selecting cognate aminoacyl-transfer RNA (tRNA) molecules. The large subunit (LSU) contains the ribosomal catalytic site termed the peptidyl transferase center (PTC), which catalyzes the formation of peptide bonds, thereby polymerizing the amino acids delivered by tRNAs into a polypeptide chain. The nascent polypeptides leave the ribosome through a tunnel in the LSU and interact with protein factors that function in enzymatic processing, targeting, and the membrane insertion of nascent chains at the exit of the ribosomal tunnel. As part of the 5S RNP/5S ribonucleoprotein particle it is an essential component of the LSU, required for its formation and the maturation of rRNAs. It also couples ribosome biogenesis to p53/TP53 activation. As part of the 5S RNP it accumulates in the nucleoplasm and inhibits MDM2, when ribosome biogenesis is perturbed, mediating the stabilization and the activation of TP53. The chain is Large ribosomal subunit protein uL18B (rpl5-b) from Xenopus laevis (African clawed frog).